Reading from the N-terminus, the 146-residue chain is 3-dehydroquinate dehydratase (146 aa).

The active-site Proton acceptor is the Y23. The substrate site is built by N75, H81, and D88. H101 (proton donor) is an active-site residue. Substrate contacts are provided by residues 102–103 (LS) and R112.

Belongs to the type-II 3-dehydroquinase family. In terms of assembly, homododecamer.

It catalyses the reaction 3-dehydroquinate = 3-dehydroshikimate + H2O. It participates in metabolic intermediate biosynthesis; chorismate biosynthesis; chorismate from D-erythrose 4-phosphate and phosphoenolpyruvate: step 3/7. Functionally, catalyzes a trans-dehydration via an enolate intermediate. This chain is 3-dehydroquinate dehydratase, found in Saccharophagus degradans (strain 2-40 / ATCC 43961 / DSM 17024).